Reading from the N-terminus, the 122-residue chain is uncharacterized protein (122 aa).

Topologically, residues 1 to 24 (MKNRKFSNLLLLRLRILCFNKKPA) are cytoplasmic. Residues 25 to 45 (FAATSYAFFFRNFSVLIFIMV) form a helical membrane-spanning segment. The Extracellular segment spans residues 46-57 (PDEKENGAAADN). Residues 58 to 78 (SFSLLIGRGVVLFLFYCPTAL) traverse the membrane as a helical segment. Topologically, residues 79-122 (KMHGPVPAHWFCDKNIEAIQSDGQIRLLRSGPFPWSHGTCIRGA) are cytoplasmic.

It localises to the membrane. This is an uncharacterized protein from Saccharomyces cerevisiae (strain ATCC 204508 / S288c) (Baker's yeast).